A 404-amino-acid polypeptide reads, in one-letter code: G-protein coupled receptor 182 (404 aa).

The Extracellular portion of the chain corresponds to Met1–Phe57. Asn28 and Asn37 each carry an N-linked (GlcNAc...) asparagine glycan. The helical transmembrane segment at Ala58–Trp79 threads the bilayer. Residues Arg80 to Leu90 lie on the Cytoplasmic side of the membrane. A helical transmembrane segment spans residues Tyr91–Val113. The Extracellular segment spans residues Thr114–Arg127. Residues Cys126 and Cys202 are joined by a disulfide bond. Residues Phe128–Val149 form a helical membrane-spanning segment. Topologically, residues Asp150–Arg170 are cytoplasmic. Residues Arg171–Gln193 form a helical membrane-spanning segment. The Extracellular segment spans residues Leu194–Ala217. Residues Val218–Val239 traverse the membrane as a helical segment. Residues Leu240–Leu258 are Cytoplasmic-facing. The chain crosses the membrane as a helical span at residues Leu259–Leu280. The Extracellular segment spans residues Leu281–Tyr299. Residues Phe300–Tyr320 traverse the membrane as a helical segment. Residues Asn321 to Ser404 are Cytoplasmic-facing.

The protein belongs to the G-protein coupled receptor 1 family. Highly expressed in heart, skeletal muscle, immune system, adrenal gland and liver.

The protein resides in the cell membrane. In terms of biological role, orphan receptor. The polypeptide is G-protein coupled receptor 182 (GPR182) (Homo sapiens (Human)).